A 66-amino-acid polypeptide reads, in one-letter code: Cold shock-like protein CspD (66 aa).

Residues 4 to 63 form the CSD domain; sequence GKVKWFNGEKGFGFIEVEGGEDVFVHFSAIQGDGFKTLEEGQEVSFEIVDGNRGPQAANV.

As to quaternary structure, homodimer.

The protein localises to the cytoplasm. The protein is Cold shock-like protein CspD (cspD) of Bacillus cereus.